The primary structure comprises 396 residues: Tyrosine--tRNA ligase (396 aa).

The 'HIGH' region motif lies at 43 to 52 (PSSPDIHLGH). The 'KMSKS' region signature appears at 227–231 (KMSKS). Lysine 230 contacts ATP. The 59-residue stretch at 338-396 (TGVIDFIILSGLAKSKSEARRLLEQGAVEINSEKISDQNTPVKCGDIIKAGKRRYSKAI) folds into the S4 RNA-binding domain.

This sequence belongs to the class-I aminoacyl-tRNA synthetase family. TyrS type 2 subfamily. In terms of assembly, homodimer.

The protein resides in the cytoplasm. The catalysed reaction is tRNA(Tyr) + L-tyrosine + ATP = L-tyrosyl-tRNA(Tyr) + AMP + diphosphate + H(+). Its function is as follows. Catalyzes the attachment of tyrosine to tRNA(Tyr) in a two-step reaction: tyrosine is first activated by ATP to form Tyr-AMP and then transferred to the acceptor end of tRNA(Tyr). This is Tyrosine--tRNA ligase from Dehalococcoides mccartyi (strain CBDB1).